A 180-amino-acid polypeptide reads, in one-letter code: ATP synthase subunit delta (180 aa).

Belongs to the ATPase delta chain family. As to quaternary structure, F-type ATPases have 2 components, F(1) - the catalytic core - and F(0) - the membrane proton channel. F(1) has five subunits: alpha(3), beta(3), gamma(1), delta(1), epsilon(1). F(0) has three main subunits: a(1), b(2) and c(10-14). The alpha and beta chains form an alternating ring which encloses part of the gamma chain. F(1) is attached to F(0) by a central stalk formed by the gamma and epsilon chains, while a peripheral stalk is formed by the delta and b chains.

The protein resides in the cell inner membrane. Functionally, f(1)F(0) ATP synthase produces ATP from ADP in the presence of a proton or sodium gradient. F-type ATPases consist of two structural domains, F(1) containing the extramembraneous catalytic core and F(0) containing the membrane proton channel, linked together by a central stalk and a peripheral stalk. During catalysis, ATP synthesis in the catalytic domain of F(1) is coupled via a rotary mechanism of the central stalk subunits to proton translocation. In terms of biological role, this protein is part of the stalk that links CF(0) to CF(1). It either transmits conformational changes from CF(0) to CF(1) or is implicated in proton conduction. This chain is ATP synthase subunit delta, found in Legionella pneumophila subsp. pneumophila (strain Philadelphia 1 / ATCC 33152 / DSM 7513).